Reading from the N-terminus, the 363-residue chain is GTP-binding protein 1 (363 aa).

The OBG-type G domain occupies 63 to 287; it reads ARVAFIGFPS…LKERIWEELN (225 aa). GTP is bound by residues 69–76, 115–119, and 246–249; these read GFPSVGKS, DLPGI, and KIDA. Residues 287–362 enclose the TGS domain; that stretch reads NLYRIYTKRK…EEGDVVTIVT (76 aa).

This sequence belongs to the TRAFAC class OBG-HflX-like GTPase superfamily. OBG GTPase family.

This chain is GTP-binding protein 1 (gtp1), found in Schizosaccharomyces pombe (strain 972 / ATCC 24843) (Fission yeast).